Here is a 412-residue protein sequence, read N- to C-terminus: NADH-quinone oxidoreductase subunit D (412 aa).

This sequence belongs to the complex I 49 kDa subunit family. In terms of assembly, NDH-1 is composed of 14 different subunits. Subunits NuoB, C, D, E, F, and G constitute the peripheral sector of the complex.

The protein resides in the cell inner membrane. The enzyme catalyses a quinone + NADH + 5 H(+)(in) = a quinol + NAD(+) + 4 H(+)(out). Its function is as follows. NDH-1 shuttles electrons from NADH, via FMN and iron-sulfur (Fe-S) centers, to quinones in the respiratory chain. The immediate electron acceptor for the enzyme in this species is believed to be ubiquinone. Couples the redox reaction to proton translocation (for every two electrons transferred, four hydrogen ions are translocated across the cytoplasmic membrane), and thus conserves the redox energy in a proton gradient. The polypeptide is NADH-quinone oxidoreductase subunit D (Sulfurimonas denitrificans (strain ATCC 33889 / DSM 1251) (Thiomicrospira denitrificans (strain ATCC 33889 / DSM 1251))).